Here is a 384-residue protein sequence, read N- to C-terminus: MKKDENLLKDLWFIAISAAGGFILSLTGISIGWMIGTLIVACCLAMIRPAWLMMAPDQKGINRRWLALGQMILGIELGQKLNLSVLSVLKDHWFSVGVMLILSILLAMLSGYVLWRFSKTDMMTSFVGTAPGGLSAMPSIAQEVGANTAIVSLVQMMRVLLVVLSIPFLVILIYTKQDRTASAAAETISSATTDFRLAPVLWTVILILAAWGACKAAKFLKFPAPWLLGSMLGVAIVHVGGAAVTGHDMTAWWLSQANHVSQVFLGATIGSKMYKSMFAGVTRIIIVGFVSSVGLIAAMFLSAVIVSELTGISLITSVLAFAPGGIAEMATTSVTLHADSTFVVAVQVIRVILVIALLPPFYRLLHHLHGEKKDKKSSISGSSA.

10 helical membrane passes run 11–31 (LWFIAISAAGGFILSLTGISI), 33–53 (WMIGTLIVACCLAMIRPAWLM), 66–86 (LALGQMILGIELGQKLNLSVL), 94–114 (FSVGVMLILSILLAMLSGYVL), 153–173 (LVQMMRVLLVVLSIPFLVILI), 197–217 (LAPVLWTVILILAAWGACKAA), 224–244 (APWLLGSMLGVAIVHVGGAAV), 284–304 (IIIVGFVSSVGLIAAMFLSAV), 309–329 (LTGISLITSVLAFAPGGIAEM), and 342–362 (FVVAVQVIRVILVIALLPPFY).

The protein belongs to the AbrB family.

It localises to the cell membrane. This is an uncharacterized protein from Bacillus subtilis (strain 168).